The sequence spans 174 residues: Adenine phosphoribosyltransferase (174 aa).

Belongs to the purine/pyrimidine phosphoribosyltransferase family. As to quaternary structure, homodimer.

The protein localises to the cytoplasm. The enzyme catalyses AMP + diphosphate = 5-phospho-alpha-D-ribose 1-diphosphate + adenine. The protein operates within purine metabolism; AMP biosynthesis via salvage pathway; AMP from adenine: step 1/1. Functionally, catalyzes a salvage reaction resulting in the formation of AMP, that is energically less costly than de novo synthesis. In Phocaeicola vulgatus (strain ATCC 8482 / DSM 1447 / JCM 5826 / CCUG 4940 / NBRC 14291 / NCTC 11154) (Bacteroides vulgatus), this protein is Adenine phosphoribosyltransferase.